Here is a 257-residue protein sequence, read N- to C-terminus: Pimeloyl-[acyl-carrier protein] methyl ester esterase (257 aa).

Residues 15–241 enclose the AB hydrolase-1 domain; sequence HLVLLHGWGL…KAAHAPFVSH (227 aa). Substrate-binding positions include W22, 82-83, and 143-147; these read SL and FLALQ. S82 acts as the Nucleophile in catalysis. Catalysis depends on residues D207 and H235. H235 is a substrate binding site.

It belongs to the AB hydrolase superfamily. Carboxylesterase BioH family. As to quaternary structure, monomer.

The protein localises to the cytoplasm. It carries out the reaction 6-carboxyhexanoyl-[ACP] methyl ester + H2O = 6-carboxyhexanoyl-[ACP] + methanol + H(+). It participates in cofactor biosynthesis; biotin biosynthesis. Its function is as follows. The physiological role of BioH is to remove the methyl group introduced by BioC when the pimeloyl moiety is complete. It allows to synthesize pimeloyl-ACP via the fatty acid synthetic pathway through the hydrolysis of the ester bonds of pimeloyl-ACP esters. The protein is Pimeloyl-[acyl-carrier protein] methyl ester esterase of Klebsiella pneumoniae subsp. pneumoniae (strain ATCC 700721 / MGH 78578).